We begin with the raw amino-acid sequence, 213 residues long: NADH dehydrogenase [ubiquinone] iron-sulfur protein 7, mitochondrial (213 aa).

A mitochondrion-targeting transit peptide spans 1–31; that stretch reads MALIARNAKLLTGTAPFLQRAATIHTTLPSL. The span at 30–42 shows a compositional bias: low complexity; sequence SLSQQPASSPATS. Residues 30 to 52 are disordered; the sequence is SLSQQPASSPATSGGAQPPSMNT. The [4Fe-4S] cluster site is built by Cys-88, Cys-89, Cys-153, and Cys-183.

It belongs to the complex I 20 kDa subunit family. As to quaternary structure, complex I is composed of about 45 different subunits. This is a component of the iron-sulfur (IP) fragment of the enzyme. [4Fe-4S] cluster serves as cofactor.

It localises to the mitochondrion. It catalyses the reaction a ubiquinone + NADH + 5 H(+)(in) = a ubiquinol + NAD(+) + 4 H(+)(out). Its function is as follows. Core subunit of the mitochondrial membrane respiratory chain NADH dehydrogenase (Complex I) that is believed to belong to the minimal assembly required for catalysis. Complex I functions in the transfer of electrons from NADH to the respiratory chain. The immediate electron acceptor for the enzyme is believed to be ubiquinone. The sequence is that of NADH dehydrogenase [ubiquinone] iron-sulfur protein 7, mitochondrial from Solanum tuberosum (Potato).